We begin with the raw amino-acid sequence, 125 residues long: Alpha-endosulfine (125 aa).

Over residues 1–37 the composition is skewed to basic and acidic residues; that stretch reads MSDKYIGDSHLEETGEEKQDSQEKEAVTPEKAEEQKL. The interval 1–53 is disordered; that stretch reads MSDKYIGDSHLEETGEEKQDSQEKEAVTPEKAEEQKLKAKYPNLGQKPGGSDF. Thr28 is subject to Phosphothreonine; by CDK2. Ser67 carries the post-translational modification Phosphoserine; by GWL. The interval 81–108 is disordered; the sequence is QLPCAGPDKNLVTGDHIPTPQDLPQRKS. A Phosphothreonine; by CDK2 modification is found at Thr99. Ser109 is modified (phosphoserine; by PKA).

The protein belongs to the endosulfine family. In terms of processing, phosphorylation at Ser-67 by gwl during mitosis is essential for interaction with ppp2r2d (PR55-delta) and subsequent inactivation of PP2A.

Its subcellular location is the cytoplasm. Protein phosphatase inhibitor that specifically inhibits protein phosphatase 2A (PP2A) during mitosis. When phosphorylated at Ser-67 during mitosis, specifically interacts with ppp2r2d (PR55-delta) and inhibits its activity, leading to inactivation of PP2A, an essential condition to keep cyclin-B1-CDK1 activity high during M phase. The protein is Alpha-endosulfine (ensa) of Xenopus tropicalis (Western clawed frog).